The primary structure comprises 425 residues: MAKQIQAIRGMNDCLPEQTPVWQMVEATLRRVVSSYGYSEIRMPVVEMTNLFQRAIGEVTDVVEKEMYTFNDRNGDSLTLRPEGTAGCVRACIEHGLVYNQERRLWYVGPMFRHERPQKGRYRQFHQFGVEVFGLTGPDIDAELIMMTARLWRELGIAQFTTLQLNTLGSSAERAAYRDALVTFLEQHKESLDEESQRRMYSNPLRVLDTKNPQVQEILQHAPTMADYFGEETKAHFSGLKALLDAAGIAYQVNERLVRGLDYYNYTVFEWVTDSLGAQGTICGGGRYDGLVEQLGGQATPAIGFAMGLERLTLMLETLEQIRNIPSTVDVYICMAGEGTLTAGLLLAEKLRSERPQLRVMTHCGGGNFKKQMKRADKVEARIALILGETEVAEQKVTVKFLRDQVEQQTVDVTALLPILAQLGE.

This sequence belongs to the class-II aminoacyl-tRNA synthetase family. Homodimer.

The protein resides in the cytoplasm. The catalysed reaction is tRNA(His) + L-histidine + ATP = L-histidyl-tRNA(His) + AMP + diphosphate + H(+). The chain is Histidine--tRNA ligase from Tolumonas auensis (strain DSM 9187 / NBRC 110442 / TA 4).